A 517-amino-acid chain; its full sequence is Beta-galactoside alpha-2,6-sialyltransferase 2 (517 aa).

Residues 1 to 10 are Cytoplasmic-facing; it reads MKPNLKQWKQ. The helical; Signal-anchor for type II membrane protein transmembrane segment at 11-31 threads the bilayer; that stretch reads FMLFGICAWGLLFLVIFVYFT. Topologically, residues 32–517 are lumenal; sequence DSNSVEPVPS…IHCPIKDHIT (486 aa). N-linked (GlcNAc...) asparagine glycosylation is found at N201, N298, and N328. 3 disulfide bridges follow: C244-C510, C287-C439, and C457-C468.

It belongs to the glycosyltransferase 29 family.

Its subcellular location is the golgi apparatus. The protein resides in the golgi stack membrane. It catalyses the reaction a beta-D-galactoside + CMP-N-acetyl-beta-neuraminate = an N-acetyl-alpha-neuraminyl-(2-&gt;6)-beta-D-galactosyl derivative + CMP + H(+). Its function is as follows. Transfers sialic acid from the donor of substrate CMP-sialic acid to galactose containing acceptor substrates. This is Beta-galactoside alpha-2,6-sialyltransferase 2 (st6gal2) from Xenopus tropicalis (Western clawed frog).